The sequence spans 338 residues: UbiA prenyltransferase domain-containing protein 1 (338 aa).

Position 2 is an N-acetylalanine (alanine 2). 8 consecutive transmembrane segments (helical) span residues 83-103 (LLVGCAVAVLAVHGAGNLVNT), 134-154 (FGVFLYTLGCVCAACLYYLSP), 160-180 (LALIYFGGLSGSFLYTGGIGF), 188-208 (LIILITFGPLAVMFAYAIQVG), 209-229 (SLAIFPLVYAIPLALSTEAIL), 245-267 (IVTLAILIGPTFSYILYNTLLFL), 277-297 (THCTISLALPLLTIPMAFSLE), and 315-335 (LNLLLGLFYVFGIILAPAGSL).

This sequence belongs to the UbiA prenyltransferase family. Interacts with HMGCR and SOAT1. Ubiquitously expressed.

The protein localises to the endoplasmic reticulum membrane. The protein resides in the golgi apparatus membrane. It localises to the mitochondrion membrane. It is found in the cytoplasm. Its subcellular location is the nucleus. It catalyses the reaction menadiol + (2E,6E,10E)-geranylgeranyl diphosphate = menaquinol-4 + diphosphate. It carries out the reaction all-trans-decaprenyl diphosphate + 4-hydroxybenzoate = 4-hydroxy-3-(all-trans-decaprenyl)benzoate + diphosphate. It participates in quinol/quinone metabolism; menaquinone biosynthesis. Its pathway is cofactor biosynthesis; ubiquinone biosynthesis. Prenyltransferase that mediates the formation of menaquinone-4 (MK-4) and coenzyme Q10. MK-4 is a vitamin K2 isoform present at high concentrations in the brain, kidney and pancreas, and is required for endothelial cell development. Mediates the conversion of phylloquinone (PK) into MK-4, probably by cleaving the side chain of phylloquinone (PK) to release 2-methyl-1,4-naphthoquinone (menadione; K3) and then prenylating it with geranylgeranyl pyrophosphate (GGPP) to form MK-4. Also plays a role in cardiovascular development independently of MK-4 biosynthesis, by acting as a coenzyme Q10 biosynthetic enzyme: coenzyme Q10, also named ubiquinone, plays an important antioxidant role in the cardiovascular system. Mediates biosynthesis of coenzyme Q10 in the Golgi membrane, leading to protect cardiovascular tissues from NOS3/eNOS-dependent oxidative stress. In Homo sapiens (Human), this protein is UbiA prenyltransferase domain-containing protein 1.